The following is a 386-amino-acid chain: WD repeat-containing protein 89 (386 aa).

WD repeat units follow at residues 21-65, 68-107, 112-156, 167-207, 213-253, and 318-357; these read KEPT…LLRE, GSPG…EKPA, GYPS…QDLS, THSD…EEDA, NSVS…TDEP, and GHAA…KTFT.

The chain is WD repeat-containing protein 89 (Wdr89) from Rattus norvegicus (Rat).